The chain runs to 102 residues: MQSQKIRIRLKAFDYRLIDKSALEIVETAKRTGAVVKGPVPLPTRIERFDVLRSPHVNKTSRDQFEIRTHLRLMDIMDPTDKTVDALMKLDLPAGVDVEIKL.

Belongs to the universal ribosomal protein uS10 family. Part of the 30S ribosomal subunit.

Functionally, involved in the binding of tRNA to the ribosomes. The polypeptide is Small ribosomal subunit protein uS10 (Nitrosospira multiformis (strain ATCC 25196 / NCIMB 11849 / C 71)).